The sequence spans 137 residues: Small ribosomal subunit protein uS12 (137 aa).

Positions 1 to 25 (MPTINQLVRQGRKSKTYKSDSPALS) are disordered. Asp102 is modified (3-methylthioaspartic acid).

Belongs to the universal ribosomal protein uS12 family. In terms of assembly, part of the 30S ribosomal subunit. Contacts proteins S8 and S17. May interact with IF1 in the 30S initiation complex.

With S4 and S5 plays an important role in translational accuracy. Its function is as follows. Interacts with and stabilizes bases of the 16S rRNA that are involved in tRNA selection in the A site and with the mRNA backbone. Located at the interface of the 30S and 50S subunits, it traverses the body of the 30S subunit contacting proteins on the other side and probably holding the rRNA structure together. The combined cluster of proteins S8, S12 and S17 appears to hold together the shoulder and platform of the 30S subunit. This is Small ribosomal subunit protein uS12 from Finegoldia magna (strain ATCC 29328 / DSM 20472 / WAL 2508) (Peptostreptococcus magnus).